The sequence spans 385 residues: 1-deoxy-D-xylulose 5-phosphate reductoisomerase (385 aa).

NADPH is bound by residues threonine 10, glycine 11, serine 12, isoleucine 13, asparagine 38, and asparagine 124. Position 125 (lysine 125) interacts with 1-deoxy-D-xylulose 5-phosphate. Glutamate 126 is an NADPH binding site. Aspartate 150 provides a ligand contact to Mn(2+). 1-deoxy-D-xylulose 5-phosphate-binding residues include serine 151, glutamate 152, serine 176, and histidine 199. Glutamate 152 lines the Mn(2+) pocket. Glycine 205 serves as a coordination point for NADPH. Residues serine 212, asparagine 217, lysine 218, and glutamate 221 each coordinate 1-deoxy-D-xylulose 5-phosphate. Mn(2+) is bound at residue glutamate 221.

The protein belongs to the DXR family. Mg(2+) is required as a cofactor. Mn(2+) serves as cofactor.

It carries out the reaction 2-C-methyl-D-erythritol 4-phosphate + NADP(+) = 1-deoxy-D-xylulose 5-phosphate + NADPH + H(+). It functions in the pathway isoprenoid biosynthesis; isopentenyl diphosphate biosynthesis via DXP pathway; isopentenyl diphosphate from 1-deoxy-D-xylulose 5-phosphate: step 1/6. Functionally, catalyzes the NADPH-dependent rearrangement and reduction of 1-deoxy-D-xylulose-5-phosphate (DXP) to 2-C-methyl-D-erythritol 4-phosphate (MEP). The polypeptide is 1-deoxy-D-xylulose 5-phosphate reductoisomerase (Clostridium acetobutylicum (strain ATCC 824 / DSM 792 / JCM 1419 / IAM 19013 / LMG 5710 / NBRC 13948 / NRRL B-527 / VKM B-1787 / 2291 / W)).